A 237-amino-acid chain; its full sequence is Ly6/PLAUR domain-containing protein 8 (237 aa).

The first 19 residues, 1-19, serve as a signal peptide directing secretion; the sequence is MKGILVAGITAVLVAAVES. Asn45, Asn73, Asn107, Asn118, Asn132, Asn172, Asn175, and Asn185 each carry an N-linked (GlcNAc...) asparagine glycan. Residues 125–176 form the UPAR/Ly6 domain; sequence CPACYESNGTSCHGKPWKCYEEEQCVFLVAELKNDIESKSLVLKGCSNVSNA. Asn215 is lipidated: GPI-anchor amidated asparagine. The propeptide at 216 to 237 is removed in mature form; the sequence is VGSKASLYLLALASLLLRGLLP.

Belongs to the CNF-like-inhibitor family. Highly N-glycosylated. Not O-glycosylated. Post-translationally, GPI-anchored. The GPI-anchor is cleaved, leading to secretion into the colonic lumen. In terms of tissue distribution, expressed in the large intestine. Preferentially expressed on the epithelial layer exposed to the lumen (at protein level).

Its subcellular location is the cell membrane. The protein resides in the secreted. Functionally, secreted protein specifically required to prevent invasion of Gram-negative bacteria in the inner mucus layer of the colon epithelium, a portion of the large intestine which is free of commensal microbiota. Prevents invasion of flagellated microbiota by binding to the flagellum of bacteria, such as P.mirabilis, thereby inhibiting bacterial motility in the intestinal lumen. Segregation of intestinal bacteria and epithelial cells in the colon is required to preserve intestinal homeostasis. The sequence is that of Ly6/PLAUR domain-containing protein 8 from Homo sapiens (Human).